The chain runs to 391 residues: Mannose-6-phosphate isomerase (391 aa).

Zn(2+) is bound by residues glutamine 97, histidine 99, glutamate 134, and histidine 255. Arginine 274 is an active-site residue. Lysine 280 bears the N6-acetyllysine mark.

Belongs to the mannose-6-phosphate isomerase type 1 family. Requires Zn(2+) as cofactor.

It localises to the cytoplasm. The enzyme catalyses D-mannose 6-phosphate = D-fructose 6-phosphate. Its function is as follows. Involved in the conversion of glucose to GDP-L-fucose, which can be converted to L-fucose, a capsular polysaccharide. The polypeptide is Mannose-6-phosphate isomerase (manA) (Shigella flexneri).